Here is a 95-residue protein sequence, read N- to C-terminus: MLHTLHRSPWLTDFAALLRLLSEGDELLLLQDGVTAAVDGNRYLESLRNAPIKVYALNEDLIARGLIGQISNDIIPIDYTDFVRLTVKHSSQMAW.

This sequence belongs to the DsrH/TusB family. As to quaternary structure, heterohexamer, formed by a dimer of trimers. The hexameric TusBCD complex contains 2 copies each of TusB, TusC and TusD. The TusBCD complex interacts with TusE.

The protein resides in the cytoplasm. Its function is as follows. Part of a sulfur-relay system required for 2-thiolation of 5-methylaminomethyl-2-thiouridine (mnm(5)s(2)U) at tRNA wobble positions. The protein is Protein TusB of Shigella dysenteriae serotype 1 (strain Sd197).